Here is a 306-residue protein sequence, read N- to C-terminus: Pantothenate kinase (306 aa).

91–98 is an ATP binding site; sequence GSVAVGKS.

The protein belongs to the prokaryotic pantothenate kinase family.

It is found in the cytoplasm. It carries out the reaction (R)-pantothenate + ATP = (R)-4'-phosphopantothenate + ADP + H(+). It functions in the pathway cofactor biosynthesis; coenzyme A biosynthesis; CoA from (R)-pantothenate: step 1/5. The protein is Pantothenate kinase of Streptococcus pneumoniae (strain Hungary19A-6).